Consider the following 448-residue polypeptide: Adenylosuccinate synthetase 1 (448 aa).

Residues 22 to 28 (GDEGKGK) and 50 to 52 (GHT) contribute to the GTP site. Aspartate 23 functions as the Proton acceptor in the catalytic mechanism. Residues aspartate 23 and glycine 50 each coordinate Mg(2+). Residues 23-26 (DEGK), 48-51 (NAGH), threonine 139, arginine 153, glutamine 234, threonine 249, and arginine 321 each bind IMP. Histidine 51 acts as the Proton donor in catalysis. 317–323 (SVTGRPR) serves as a coordination point for substrate. GTP contacts are provided by residues arginine 323, 349–351 (KLD), and 431–433 (STG).

This sequence belongs to the adenylosuccinate synthetase family. In terms of assembly, homodimer. It depends on Mg(2+) as a cofactor.

It is found in the cytoplasm. It catalyses the reaction IMP + L-aspartate + GTP = N(6)-(1,2-dicarboxyethyl)-AMP + GDP + phosphate + 2 H(+). Its pathway is purine metabolism; AMP biosynthesis via de novo pathway; AMP from IMP: step 1/2. Its function is as follows. Plays an important role in the de novo pathway of purine nucleotide biosynthesis. Catalyzes the first committed step in the biosynthesis of AMP from IMP. In Burkholderia lata (strain ATCC 17760 / DSM 23089 / LMG 22485 / NCIMB 9086 / R18194 / 383), this protein is Adenylosuccinate synthetase 1.